The primary structure comprises 252 residues: MASIHIETTGNGPDLVMLHGWAMHSGVWDGVVESLSQRFRLHQVDLPGHGASRDCALDSLDQMTEVIADRLPGRYSVCGWSLGGQVAIRLALQAPERVQQLVLVASTPCFVRRADWPWGMEDSTLTLFMENLARDYTQTLNRFLTLQVSGSEDQARVLAWLRKSILRGQPPTPATLQAGLKILQTSDLRAELNQVSQPVLLIHGRNDVITPAGAADWMQQHLPRARLVLFPHCGHAPFLSFPEQFVSCFDAL.

Residues 15–239 (LVMLHGWAMH…FPHCGHAPFL (225 aa)) form the AB hydrolase-1 domain. Substrate contacts are provided by residues tryptophan 21, 81-82 (SL), and 143-147 (FLTLQ). Serine 81 acts as the Nucleophile in catalysis. Catalysis depends on residues aspartate 207 and histidine 235. Residue histidine 235 coordinates substrate.

Belongs to the AB hydrolase superfamily. Carboxylesterase BioH family. Monomer.

It localises to the cytoplasm. The enzyme catalyses 6-carboxyhexanoyl-[ACP] methyl ester + H2O = 6-carboxyhexanoyl-[ACP] + methanol + H(+). Its pathway is cofactor biosynthesis; biotin biosynthesis. Functionally, the physiological role of BioH is to remove the methyl group introduced by BioC when the pimeloyl moiety is complete. It allows to synthesize pimeloyl-ACP via the fatty acid synthetic pathway through the hydrolysis of the ester bonds of pimeloyl-ACP esters. The sequence is that of Pimeloyl-[acyl-carrier protein] methyl ester esterase from Nitrosomonas europaea (strain ATCC 19718 / CIP 103999 / KCTC 2705 / NBRC 14298).